Here is a 2293-residue protein sequence, read N- to C-terminus: Protein Ycf2 (2293 aa).

Residue 1647–1654 participates in ATP binding; it reads GSIGTGRS.

It belongs to the Ycf2 family.

It localises to the plastid. The protein resides in the chloroplast stroma. Its function is as follows. Probable ATPase of unknown function. Its presence in a non-photosynthetic plant (Epifagus virginiana) and experiments in tobacco indicate that it has an essential function which is probably not related to photosynthesis. The protein is Protein Ycf2 of Lobularia maritima (Sweet alyssum).